Here is a 425-residue protein sequence, read N- to C-terminus: Formyl-CoA:oxalate CoA-transferase (425 aa).

CoA-binding positions include 17–18 (QS), Arg-38, 72–75 (LDTK), 96–98 (NFG), Arg-104, and 136–139 (KVYE). The Nucleophile role is filled by Asp-168. 247-249 (GGQ) lines the substrate pocket.

Belongs to the CoA-transferase III family. Frc subfamily. In terms of assembly, homodimer.

It catalyses the reaction formyl-CoA + oxalate = oxalyl-CoA + formate. Its pathway is metabolic intermediate degradation; oxalate degradation; CO(2) and formate from oxalate: step 1/2. In terms of biological role, involved in the catabolism of oxalate and in the adapatation to low pH via the induction of the oxalate-dependent acid tolerance response (ATR). Catalyzes the transfer of the CoA moiety from formyl-CoA to oxalate. The chain is Formyl-CoA:oxalate CoA-transferase from Bradyrhizobium diazoefficiens (strain JCM 10833 / BCRC 13528 / IAM 13628 / NBRC 14792 / USDA 110).